The following is a 344-amino-acid chain: Putative replication factor C small subunit L499 (344 aa).

Residue 57-64 participates in ATP binding; the sequence is GPSGSGKT.

It belongs to the activator 1 small subunits family. RfcS subfamily.

Functionally, part of the RFC clamp loader complex which loads the PCNA sliding clamp onto DNA. The sequence is that of Putative replication factor C small subunit L499 from Acanthamoeba polyphaga mimivirus (APMV).